Consider the following 461-residue polypeptide: Protein YIG1 (461 aa).

The segment at 58 to 80 (SNVGEDGGDVGNYSEEDDDGDEE) is disordered. A compositionally biased stretch (acidic residues) spans 71–80 (SEEDDDGDEE).

Its subcellular location is the cytoplasm. It is found in the nucleus. Its function is as follows. Involved in the regulation of anaerobiotic glycerol metabolism. This is Protein YIG1 (YIG1) from Saccharomyces cerevisiae (strain ATCC 204508 / S288c) (Baker's yeast).